The chain runs to 198 residues: Recombination protein RecR (198 aa).

The C4-type zinc-finger motif lies at 57–72; it reads CLNCGCLTDEAACYFC. Residues 80 to 175 form the Toprim domain; sequence QIICVTAFPR…QISRLAFGLP (96 aa).

The protein belongs to the RecR family.

May play a role in DNA repair. It seems to be involved in an RecBC-independent recombinational process of DNA repair. It may act with RecF and RecO. The polypeptide is Recombination protein RecR (Protochlamydia amoebophila (strain UWE25)).